Consider the following 159-residue polypeptide: MSANAEKEHAMLAEVLRDNGYHEYRARLQALLDIPELASDFEIHTRITDGFAATWLVKLTERGVLTPVERDQIIPLRTLKSRIERDQPLTVDESDRLFRSAHITAMAEAVFGEAGKAKRWLSKPKERFSGLTPMQMLTTQQGTTQVEEMLLQIAEGYGL.

The protein belongs to the MbcA/ParS/Xre antitoxin family. Homodimer. Forms a complex with cognate toxin Res; the 2 toxin molecules dimerize and each contacts an Xre homodimer. Most Res-Xre contacts are between the antitoxin molecule closest to the toxin.

Functionally, probable antitoxin component of a type II toxin-antitoxin (TA) system. In vivo probably neutralizes the toxic effect of cognate toxin Res. The protein is Antitoxin Xre of Pseudomonas putida (strain ATCC 47054 / DSM 6125 / CFBP 8728 / NCIMB 11950 / KT2440).